A 72-amino-acid polypeptide reads, in one-letter code: Large ribosomal subunit protein bL28 (72 aa).

This sequence belongs to the bacterial ribosomal protein bL28 family.

The polypeptide is Large ribosomal subunit protein bL28 (Chlorobium phaeovibrioides (strain DSM 265 / 1930) (Prosthecochloris vibrioformis (strain DSM 265))).